The chain runs to 149 residues: Calmodulin (149 aa).

At alanine 2 the chain carries N-acetylalanine. 4 EF-hand domains span residues 8-43 (EQIS…LGQN), 44-79 (PTEA…KMRD), 81-116 (DSEE…LGEK), and 117-149 (LTDN…MLSK). Ca(2+) contacts are provided by aspartate 21, aspartate 23, aspartate 25, threonine 27, glutamate 32, aspartate 57, aspartate 59, asparagine 61, threonine 63, glutamate 68, aspartate 94, aspartate 96, asparagine 98, tyrosine 100, glutamate 105, aspartate 130, aspartate 132, aspartate 134, glutamine 136, and glutamate 141.

It belongs to the calmodulin family.

Functionally, calmodulin mediates the control of a large number of enzymes, ion channels and other proteins by Ca(2+). Among the enzymes to be stimulated by the calmodulin-Ca(2+) complex are a number of protein kinases and phosphatases. This is Calmodulin (CMD1) from Pleurotus ostreatus (Oyster mushroom).